Reading from the N-terminus, the 157-residue chain is Transcription initiation factor IIA large subunit (157 aa).

Belongs to the TFIIA subunit 1 family. In terms of assembly, TFIIA is a heterodimer of the large subunit and the small subunit gamma.

Its subcellular location is the nucleus. TFIIA is a component of the transcription machinery of RNA polymerase II and plays an important role in transcriptional activation. The sequence is that of Transcription initiation factor IIA large subunit (TOA1) from Encephalitozoon cuniculi (strain GB-M1) (Microsporidian parasite).